Here is a 283-residue protein sequence, read N- to C-terminus: Non-selective voltage-gated ion channel VDAC3 (283 aa).

Residue cysteine 2 is modified to N-acetylcysteine. Threonine 4 carries the post-translational modification Phosphothreonine. N6-acetyllysine occurs at positions 12, 15, and 20. A run of 2 beta stranded transmembrane segments spans residues 26–35 (MVKIDLKTKS) and 39–47 (VEFSTSGHA). Threonine 33 bears the Phosphothreonine mark. Residue lysine 53 forms a Glycyl lysine isopeptide (Lys-Gly) (interchain with G-Cter in ubiquitin) linkage. 3 consecutive transmembrane segments (beta stranded) span residues 54–64 (ASGNLETKYKV), 69–76 (LIFTQKWN), and 80–89 (TLGTEISWEN). The residue at position 90 (lysine 90) is an N6-acetyllysine. The beta stranded transmembrane segment at 95–104 (LKLTVDTIFV) threads the bilayer. Residues lysine 109 and lysine 110 each participate in a glycyl lysine isopeptide (Lys-Gly) (interchain with G-Cter in ubiquitin) cross-link. The next 10 beta stranded transmembrane spans lie at 111 to 120 (SGKLKASYRR), 123 to 130 (FSVGSKVD), 137 to 145 (TIYGWAVLA), 150 to 158 (LAGYQMSFD), 163 to 175 (KLCQNNFALGYKA), 178 to 185 (FQLHTHVN), 189 to 198 (EFGGSIYQRV), 202 to 211 (IETSINLAWT), 218 to 227 (RFGIAAKYRL), and 231 to 238 (TSLSAKVN). Serine 241 carries the phosphoserine modification. Residues 242-244 (LIG) and 260-264 (SALVD) each bind NAD(+). 2 beta stranded membrane-spanning segments follow: residues 242-251 (LIGLGYTQSL) and 254-263 (GVKLTLSALV). Lysine 266 carries the post-translational modification N6-acetyllysine; alternate. A Glycyl lysine isopeptide (Lys-Gly) (interchain with G-Cter in ubiquitin); alternate cross-link involves residue lysine 266. Residues 273–282 (HKVGLGFELE) form a beta stranded membrane-spanning segment.

The protein belongs to the eukaryotic mitochondrial porin family. Interacts with ARMC12 in a TBC1D21-dependent manner. Interacts with MISFA. In terms of processing, ubiquitinated by PRKN during mitophagy, leading to its degradation and enhancement of mitophagy. Deubiquitinated by USP30. Isoform 1 is widely expressed with strong expression in atrium and ascitic tumor, lower levels in brain and very low levels in liver and kidney. Isoform 2 is also widely expressed with highest levels in brain but no expression in kidney. Also expressed in flagella of epididymal sperm.

The protein localises to the mitochondrion outer membrane. It localises to the membrane. It catalyses the reaction chloride(in) = chloride(out). It carries out the reaction K(+)(in) = K(+)(out). Non-selective voltage-gated ion channel that mediates the transport of anions and cations through the mitochondrion outer membrane and plasma membrane. Forms a high-conducting channel with a stable open state and a voltage-induced closure with a mild preference for anions over cations. Involved in male fertility and sperm mitochondrial sheath formation. The polypeptide is Non-selective voltage-gated ion channel VDAC3 (Rattus norvegicus (Rat)).